The primary structure comprises 267 residues: Undecaprenyl-diphosphatase (267 aa).

7 helical membrane-spanning segments follow: residues 4–24, 41–61, 69–89, 96–116, 173–193, 207–227, and 239–259; these read LYALILGIIEGLTEFLPISST, FWKSFLIIIQLGSILAVIFVF, LDIWLKLAVGFFPTGVIGLFV, LFNGWVVVGMLIFGGVVFILI, AAEFSFLLAIPTMIIATAYSI, IPLGIGFITAFIVAVLVIKFF, and FGIYRIILGFVFFYLYYSGIL.

Belongs to the UppP family.

It localises to the cell inner membrane. It carries out the reaction di-trans,octa-cis-undecaprenyl diphosphate + H2O = di-trans,octa-cis-undecaprenyl phosphate + phosphate + H(+). Functionally, catalyzes the dephosphorylation of undecaprenyl diphosphate (UPP). Confers resistance to bacitracin. This Campylobacter jejuni subsp. jejuni serotype O:2 (strain ATCC 700819 / NCTC 11168) protein is Undecaprenyl-diphosphatase.